A 75-amino-acid chain; its full sequence is Small ribosomal subunit protein bS18 (75 aa).

The protein belongs to the bacterial ribosomal protein bS18 family. As to quaternary structure, part of the 30S ribosomal subunit. Forms a tight heterodimer with protein bS6.

Binds as a heterodimer with protein bS6 to the central domain of the 16S rRNA, where it helps stabilize the platform of the 30S subunit. The chain is Small ribosomal subunit protein bS18 from Shewanella baltica (strain OS223).